We begin with the raw amino-acid sequence, 223 residues long: Ras-related protein RABA4c (223 aa).

G22–S29 provides a ligand contact to GTP. Positions S44–F52 match the Effector region motif. GTP contacts are provided by residues D70–Q74, N128–D131, and S158–A159. S-geranylgeranyl cysteine attachment occurs at residues C219 and C220.

Belongs to the small GTPase superfamily. Rab family.

It is found in the cell membrane. Intracellular vesicle trafficking and protein transport. This is Ras-related protein RABA4c (RABA4C) from Arabidopsis thaliana (Mouse-ear cress).